A 623-amino-acid chain; its full sequence is Bifunctional dihydrofolate reductase-thymidylate synthase (623 aa).

The region spanning 9–237 (DIYAICACCK…TTLDFLVYSK (229 aa)) is the DHFR domain. 13–14 (IC) contacts substrate. NADP(+)-binding positions include alanine 15 and 38-44 (GLGNKGT). Aspartate 53 serves as a coordination point for substrate. A run of 3 repeats spans residues 88–91 (GGDN), 94–97 (GGDN), and 100–103 (GGDN). The tract at residues 88–103 (GGDNTSGGDNTHGGDN) is 3 X 4 AA repeats of G-G-D-N. NADP(+) contacts are provided by residues 115-117 (RSS), 137-139 (SKT), and aspartate 153. Substrate-binding residues include isoleucine 173, tyrosine 179, and threonine 194. 174–181 (GGAQVYRE) is an NADP(+) binding site. The disordered stretch occupies residues 263-309 (TAMRRNVAPRTAAPPMGPHSRANGERAPPRARARRTTPRQRKTTSCT). A compositionally biased stretch (basic residues) spans 291 to 304 (PRARARRTTPRQRK). Residues 337-623 (QHPEYQYLGI…HDKITMEMAA (287 aa)) are thymidylate synthase. Arginine 360 provides a ligand contact to dUMP. Residue cysteine 505 is part of the active site. DUMP is bound by residues histidine 506, 524–528 (QRSCD), asparagine 536, and 566–568 (HVY).

In the N-terminal section; belongs to the dihydrofolate reductase family. This sequence in the C-terminal section; belongs to the thymidylate synthase family. As to quaternary structure, homodimer.

It catalyses the reaction (6S)-5,6,7,8-tetrahydrofolate + NADP(+) = 7,8-dihydrofolate + NADPH + H(+). The enzyme catalyses dUMP + (6R)-5,10-methylene-5,6,7,8-tetrahydrofolate = 7,8-dihydrofolate + dTMP. The protein operates within cofactor biosynthesis; tetrahydrofolate biosynthesis; 5,6,7,8-tetrahydrofolate from 7,8-dihydrofolate: step 1/1. Bifunctional enzyme. Involved in de novo dTMP biosynthesis. Key enzyme in folate metabolism. Catalyzes an essential reaction for de novo glycine and purine synthesis, DNA precursor synthesis, and for the conversion of dUMP to dTMP. In Plasmodium vivax, this protein is Bifunctional dihydrofolate reductase-thymidylate synthase.